Consider the following 356-residue polypeptide: Nucleotide-binding protein GDI1189/Gdia_1902 (356 aa).

20 to 27 (GLSGAGKS) provides a ligand contact to ATP. Position 65–68 (65–68 (DSRT)) interacts with GTP. The tract at residues 285–313 (EPGGTCDSPGKPAHIEKGAAPTDVQSGGA) is disordered.

This sequence belongs to the RapZ-like family.

In terms of biological role, displays ATPase and GTPase activities. The sequence is that of Nucleotide-binding protein GDI1189/Gdia_1902 from Gluconacetobacter diazotrophicus (strain ATCC 49037 / DSM 5601 / CCUG 37298 / CIP 103539 / LMG 7603 / PAl5).